The primary structure comprises 531 residues: MKPVKPPRINGRVPVLSAQEAVNYIPDEATLCVLGAGGGILEATTLITALADKYKQTQTPRNLSIISPTGLGDRADRGISPLAQEGLVKWALCGHWGQSPRISELAEQNKIIAYNYPQGVLTQTLRAAAAHQPGIISDIGIGTFVDPRQQGGKLNEVTKEDLIKLVEFDNKEYLYYKAIAPDIAFIRATTCDSEGYATFEDEVMYLDALVIAQAVHNNGGIVMMQVQKMVKKATLHPKSVRIPGYLVDIVVVDPDQTQLYGGAPVNRFISGDFTLDDSTKLSLPLNQRKLVARRALFEMRKGAVGNVGVGIADGIGLVAREEGCADDFILTVETGPIGGITSQGIAFGANVNTRAILDMTSQFDFYHGGGLDVCYLSFAEVDQHGNVGVHKFNGKIMGTGGFIDISATSKKIIFCGTLTAGSLKTEITDGKLNIVQEGRVKKFIRELPEITFSGKIALERGLDVRYITERAVFTLKEDGLHLIEIAPGVDLQKDILDKMDFTPVISPELKLMDERLFIDAAMGFVLPEAAH.

Residue glutamate 333 is the 5-glutamyl coenzyme A thioester intermediate of the active site.

Belongs to the 3-oxoacid CoA-transferase family. Homotetramer; dimer of dimers.

The enzyme catalyses an acyl-CoA + acetate = a carboxylate + acetyl-CoA. Functionally, coA transferase having broad substrate specificity for short-chain acyl-CoA thioesters with the activity decreasing when the length of the carboxylic acid chain exceeds four carbons. May play a role in short-chain fatty acid metabolism in E.coli. This chain is Acetate CoA-transferase YdiF (ydiF), found in Escherichia coli (strain K12).